We begin with the raw amino-acid sequence, 313 residues long: Ribosomal RNA small subunit methyltransferase H (313 aa).

S-adenosyl-L-methionine contacts are provided by residues 35 to 37, Asp55, Phe79, Asp100, and Gln107; that span reads GGH.

The protein belongs to the methyltransferase superfamily. RsmH family.

Its subcellular location is the cytoplasm. It catalyses the reaction cytidine(1402) in 16S rRNA + S-adenosyl-L-methionine = N(4)-methylcytidine(1402) in 16S rRNA + S-adenosyl-L-homocysteine + H(+). In terms of biological role, specifically methylates the N4 position of cytidine in position 1402 (C1402) of 16S rRNA. The protein is Ribosomal RNA small subunit methyltransferase H of Burkholderia multivorans (strain ATCC 17616 / 249).